The sequence spans 347 residues: S-adenosylmethionine:tRNA ribosyltransferase-isomerase (347 aa).

The protein belongs to the QueA family. In terms of assembly, monomer.

The protein localises to the cytoplasm. It catalyses the reaction 7-aminomethyl-7-carbaguanosine(34) in tRNA + S-adenosyl-L-methionine = epoxyqueuosine(34) in tRNA + adenine + L-methionine + 2 H(+). It functions in the pathway tRNA modification; tRNA-queuosine biosynthesis. Transfers and isomerizes the ribose moiety from AdoMet to the 7-aminomethyl group of 7-deazaguanine (preQ1-tRNA) to give epoxyqueuosine (oQ-tRNA). In Bordetella parapertussis (strain 12822 / ATCC BAA-587 / NCTC 13253), this protein is S-adenosylmethionine:tRNA ribosyltransferase-isomerase.